The following is a 228-amino-acid chain: uncharacterized protein (228 aa).

Positions 194–228 (SRRADEHPAPSTEPHAAAVAPEPDFMAEPIPALEE) are disordered.

This is an uncharacterized protein from Treponema pallidum (strain Nichols).